We begin with the raw amino-acid sequence, 594 residues long: Aspartate--tRNA ligase (594 aa).

L-aspartate is bound at residue glutamate 171. The segment at 195–198 (QLFK) is aspartate. Arginine 217 contributes to the L-aspartate binding site. ATP-binding positions include 217–219 (RDE) and glutamine 226. Residue histidine 449 coordinates L-aspartate. Residue glutamate 483 coordinates ATP. An L-aspartate-binding site is contributed by arginine 490. Residue 535–538 (GLDR) coordinates ATP.

The protein belongs to the class-II aminoacyl-tRNA synthetase family. Type 1 subfamily. Homodimer.

The protein localises to the cytoplasm. It carries out the reaction tRNA(Asp) + L-aspartate + ATP = L-aspartyl-tRNA(Asp) + AMP + diphosphate. In terms of biological role, catalyzes the attachment of L-aspartate to tRNA(Asp) in a two-step reaction: L-aspartate is first activated by ATP to form Asp-AMP and then transferred to the acceptor end of tRNA(Asp). In Proteus mirabilis (strain HI4320), this protein is Aspartate--tRNA ligase.